Reading from the N-terminus, the 651-residue chain is Coronin-like protein (651 aa).

WD repeat units follow at residues 79-110 (GHTAQVLDTDFDPFNDHRIASGSDDSKIGIWD), 138-169 (GHARKVGHVLYHPVAENVLASSSGDYTVKLWN), 180-210 (KHPDMVTSMSFSYDGNYLATVARDKKLRVWN), and 226-257 (AKNQRVVWLGNSDRLATTGFSKLSDRQIGIWD). The interval 408-609 (APSFHEAKRP…TSPKSLGLKK (202 aa)) is disordered. A compositionally biased stretch (basic and acidic residues) spans 427-451 (LEEKKEQPKVEKPISESEKEVKQEA). Ser-441, Ser-454, and Ser-456 each carry phosphoserine. Low complexity predominate over residues 452-465 (PKSPSPLKSASSSS). Phosphothreonine is present on residues Thr-517 and Thr-529. Basic and acidic residues-rich tracts occupy residues 523–540 (ETKKDRTPKVEPSKELKP) and 547–572 (TDRKQEQSLPQEEKSSEKTKSPEQEK). Phosphoserine is present on residues Ser-573 and Ser-579. Residues 578–590 (SSITAAKTAITAS) show a composition bias toward low complexity. Positions 618–650 (VLQLEDVVDKLTKANLDKDERLLKLEQKIGELS) form a coiled coil.

It belongs to the WD repeat coronin family. As to quaternary structure, binds to F-actin.

This Saccharomyces cerevisiae (strain ATCC 204508 / S288c) (Baker's yeast) protein is Coronin-like protein (CRN1).